Reading from the N-terminus, the 213-residue chain is THAP domain-containing protein 1 (213 aa).

Residues 5-57 (CSAYGCKNRYDKDKPVSFHKFPLTRPSLCKKWEAAVRRKNFKPTKYSSICSEH) form a THAP-type zinc finger. The short motif at 134–137 (DHNY) is the HCFC1-binding motif (HBM) element. Residues 139–190 (VEDTMHQRKRIHQLEQQVEKLRKKLKTAQQRCRRQERQLEKLKEVVHFQKEK) are a coiled coil.

The protein belongs to the THAP1 family. In terms of assembly, interacts with PAWR. Component of a THAP1/THAP3-HCFC1-OGT complex that contains, either THAP1 or THAP3, HCFC1 and OGT. Interacts with OGT. Interacts (via the HBM) with HCFC1 (via the Kelch-repeat domain); the interaction recruits HCFC1 to the RRM1 promoter.

The protein localises to the nucleus. Its subcellular location is the nucleoplasm. The protein resides in the PML body. Functionally, DNA-binding transcription regulator that regulates endothelial cell proliferation and G1/S cell-cycle progression. Specifically binds the 5'-[AT]NTNN[GT]GGCA[AGT]-3' core DNA sequence and acts by modulating expression of pRB-E2F cell-cycle target genes, including RRM1. May also have pro-apoptotic activity by potentiating both serum-withdrawal and TNF-induced apoptosis. This is THAP domain-containing protein 1 (THAP1) from Bos taurus (Bovine).